Consider the following 431-residue polypeptide: Probable sodium/metabolite cotransporter BASS3, chloroplastic (431 aa).

A chloroplast-targeting transit peptide spans 1 to 70; sequence MTLIASLSLP…RRNSGLVPVV (70 aa). 9 consecutive transmembrane segments (helical) span residues 110–130, 145–165, 169–189, 198–218, 238–258, 261–281, 288–308, 325–345, and 387–407; these read FWSALLPFVVALTAVAALSYP, LGGIMLSIGIQLSVDDFALAF, VPLSVGFVAQYVLKPLLGVLV, TFYAGFILTCCVAGAQLSSYA, IASVIFTPLLSGLLIGSVVPV, VAMSKSILQVVLVPITLGLVL, VVTLLQPVMPFVAMVCTSLCI, LGLIVPIVTFHAVAFALGYWF, and VPAACSVVVMAIMGLCLASFW.

It belongs to the bile acid:sodium symporter (BASS) (TC 2.A.28) family.

The protein resides in the membrane. It localises to the plastid. The protein localises to the chloroplast envelope. May function as sodium-coupled metabolite transporter across the chloroplast envelope. The polypeptide is Probable sodium/metabolite cotransporter BASS3, chloroplastic (BASS3) (Arabidopsis thaliana (Mouse-ear cress)).